The chain runs to 193 residues: Probable GTP-binding protein EngB (193 aa).

In terms of domain architecture, EngB-type G spans 22–193 (SFPEIVFAGR…LAHFDQYICQ (172 aa)). GTP contacts are provided by residues 30–37 (GRSNVGKS), 57–61 (GKTRL), 75–78 (DLPG), 142–145 (TKYD), and 172–174 (YSS). Residues S37 and T59 each contribute to the Mg(2+) site.

Belongs to the TRAFAC class TrmE-Era-EngA-EngB-Septin-like GTPase superfamily. EngB GTPase family. It depends on Mg(2+) as a cofactor.

Functionally, necessary for normal cell division and for the maintenance of normal septation. The protein is Probable GTP-binding protein EngB of Pelodictyon phaeoclathratiforme (strain DSM 5477 / BU-1).